The chain runs to 153 residues: ORM1-like protein 2 (153 aa).

The Cytoplasmic portion of the chain corresponds to 1–21 (MNVGVAHSEVNPNTRVMNSRG). 2 consecutive transmembrane segments (helical) span residues 22–42 (IWLA…SIPF) and 43–63 (FSIP…TYVF). Topologically, residues 64-105 (LHTVKGTPFETPDQGKARLLTHWEQMDYGLQFTSSRKFLSIS) are cytoplasmic. A helical membrane pass occupies residues 106–126 (PIVLYLLASFYTKYDAAHFLI). Topologically, residues 127-153 (NTASLLSVLLPKLPQFHGVRVFGINKY) are extracellular.

Belongs to the ORM family. Ceramide-sensitive subunit of the serine palmitoyltransferase (SPT) complex, which is also composed of SPTLC1, SPTLC2/3 and SPTSSA/B. As to expression, widely expressed. Expressed in adult and fetal heart, brain, lung, liver, skeletal muscle and kidney. Expressed in adult pancreas and placenta and in fetal spleen abd thymus.

The protein localises to the endoplasmic reticulum membrane. In terms of biological role, plays an essential role in the homeostatic regulation of sphingolipid de novo biosynthesis by modulating the activity of the serine palmitoyltransferase (SPT) in response to ceramide levels. When complexed to SPT, the binding of ceramides to its N-terminus stabilizes a conformation that block SPT substrate entry, hence preventing SPT catalytic activity. Through this mechanism, maintains ceramide levels at sufficient concentrations for the production of complex sphingolipids, but which prevents the accumulation of ceramides to levels that trigger apoptosis. The sequence is that of ORM1-like protein 2 (ORMDL2) from Homo sapiens (Human).